The sequence spans 306 residues: UDP-3-O-acyl-N-acetylglucosamine deacetylase (306 aa).

Residues H79, H239, and D243 each contribute to the Zn(2+) site. The active-site Proton donor is the H266.

This sequence belongs to the LpxC family. The cofactor is Zn(2+).

It catalyses the reaction a UDP-3-O-[(3R)-3-hydroxyacyl]-N-acetyl-alpha-D-glucosamine + H2O = a UDP-3-O-[(3R)-3-hydroxyacyl]-alpha-D-glucosamine + acetate. It functions in the pathway glycolipid biosynthesis; lipid IV(A) biosynthesis; lipid IV(A) from (3R)-3-hydroxytetradecanoyl-[acyl-carrier-protein] and UDP-N-acetyl-alpha-D-glucosamine: step 2/6. Its function is as follows. Catalyzes the hydrolysis of UDP-3-O-myristoyl-N-acetylglucosamine to form UDP-3-O-myristoylglucosamine and acetate, the committed step in lipid A biosynthesis. The sequence is that of UDP-3-O-acyl-N-acetylglucosamine deacetylase from Actinobacillus pleuropneumoniae serotype 7 (strain AP76).